Reading from the N-terminus, the 61-residue chain is Sec-independent protein translocase protein TatA (61 aa).

The chain crosses the membrane as a helical span at residues 2-22 (GLSGISPLSLLLILAIIVALF).

This sequence belongs to the TatA/E family. The Tat system comprises two distinct complexes: a TatABC complex, containing multiple copies of TatA, TatB and TatC subunits, and a separate TatA complex, containing only TatA subunits. Substrates initially bind to the TatABC complex, which probably triggers association of the separate TatA complex to form the active translocon.

Its subcellular location is the cell inner membrane. Part of the twin-arginine translocation (Tat) system that transports large folded proteins containing a characteristic twin-arginine motif in their signal peptide across membranes. TatA could form the protein-conducting channel of the Tat system. The sequence is that of Sec-independent protein translocase protein TatA from Legionella pneumophila (strain Paris).